The primary structure comprises 338 residues: Glyceraldehyde-3-phosphate dehydrogenase (338 aa).

NAD(+) contacts are provided by residues R13 to I14, D35, and R80. Residues S151–T153, T182, T211–G212, and R234 contribute to the D-glyceraldehyde 3-phosphate site. C152 serves as the catalytic Nucleophile. Residue N316 participates in NAD(+) binding.

It belongs to the glyceraldehyde-3-phosphate dehydrogenase family. As to quaternary structure, homotetramer.

It is found in the cytoplasm. The catalysed reaction is D-glyceraldehyde 3-phosphate + phosphate + NAD(+) = (2R)-3-phospho-glyceroyl phosphate + NADH + H(+). The protein operates within carbohydrate degradation; glycolysis; pyruvate from D-glyceraldehyde 3-phosphate: step 1/5. This chain is Glyceraldehyde-3-phosphate dehydrogenase (GPDA), found in Colletotrichum gloeosporioides (Anthracnose fungus).